We begin with the raw amino-acid sequence, 542 residues long: Chaperonin GroEL (542 aa).

Residues 29–32 (TLGP), 86–90 (DGTTT), Gly413, 476–478 (NAA), and Asp492 contribute to the ATP site.

This sequence belongs to the chaperonin (HSP60) family. Forms a cylinder of 14 subunits composed of two heptameric rings stacked back-to-back. Interacts with the co-chaperonin GroES.

Its subcellular location is the cytoplasm. It carries out the reaction ATP + H2O + a folded polypeptide = ADP + phosphate + an unfolded polypeptide.. Together with its co-chaperonin GroES, plays an essential role in assisting protein folding. The GroEL-GroES system forms a nano-cage that allows encapsulation of the non-native substrate proteins and provides a physical environment optimized to promote and accelerate protein folding. The polypeptide is Chaperonin GroEL (Listeria welshimeri serovar 6b (strain ATCC 35897 / DSM 20650 / CCUG 15529 / CIP 8149 / NCTC 11857 / SLCC 5334 / V8)).